Reading from the N-terminus, the 229-residue chain is Large ribosomal subunit protein uL1 (229 aa).

As to quaternary structure, part of the 50S ribosomal subunit.

Functionally, binds directly to 23S rRNA. The L1 stalk is quite mobile in the ribosome, and is involved in E site tRNA release. Its function is as follows. Protein L1 is also a translational repressor protein, it controls the translation of the L11 operon by binding to its mRNA. In Rhodopseudomonas palustris (strain ATCC BAA-98 / CGA009), this protein is Large ribosomal subunit protein uL1.